A 417-amino-acid polypeptide reads, in one-letter code: uncharacterized protein (417 aa).

A run of 4 helical transmembrane segments spans residues 87-107 (LVVA…GYWI), 130-150 (IAGT…TPSV), 177-197 (FFIT…VYAA), and 202-222 (IIDT…LWPD). The span at 366–398 (APSAPAAAEHKATSSSNSSNSSPGSSNPTTAPT) shows a compositional bias: low complexity. The interval 366–417 (APSAPAAAEHKATSSSNSSNSSPGSSNPTTAPTDKFRTGSPKTQPEKISAFW) is disordered.

Belongs to the YccS/YhfK family.

The protein resides in the cell membrane. This is an uncharacterized protein from Neisseria gonorrhoeae.